We begin with the raw amino-acid sequence, 827 residues long: Striatin homolog (827 aa).

Positions 37 to 109 (RAHWISEKAE…VEEEEEEDDK (73 aa)) form a coiled coil. Disordered stretches follow at residues 99–123 (KVEEEEEEDDKIPKNREPPKKSKDN), 181–270 (KDIN…QLQS), 311–362 (SSVS…DEQS), and 400–459 (EEGN…SELM). Basic and acidic residues predominate over residues 109–123 (KIPKNREPPKKSKDN). Low complexity-rich tracts occupy residues 184-270 (NNNN…QLQS) and 311-334 (SSVSSNSGNNSINSSSDSLDTSKQ). Positions 337-346 (EDPNNVTISK) are enriched in polar residues. Composition is skewed to low complexity over residues 347-356 (QQQQEQQQQQ), 416-432 (TPTTKSSSSSSSSSTGS), and 439-453 (SSSSSSGSSSSNSNT). WD repeat units follow at residues 495–534 (SHFDGVRSIQFHPNEPIMISASEDNSIKVWNLNHLVPTKK), 548–593 (GHTG…IDSY), 610–649 (GHQDGIWDLLSIPNTPNLLSSSADGTVSLWNTTTSEQLYT), 709–748 (NNNSQINKIVSHPFMPLAMTGSEDHKIEFFDLNSNTVVHS), 751–790 (AHSNSISSLTIDPSGLYIASCAHDSSIRFWDISSKTCIQD), and 797–827 (KYDESIHCIKYHPNKGYFASGGADSVIRILN).

Belongs to the WD repeat striatin family. Part of the core of STRIPAK complexes.

It localises to the cytoplasm. Its subcellular location is the membrane. In terms of biological role, calmodulin-binding scaffolding protein which is the center of the striatin-interacting phosphatase and kinase (STRIPAK) complexes. STRIPAK complexes have critical roles in protein (de)phosphorylation and are regulators of multiple signaling pathways including Hippo, MAPK, nuclear receptor and cytoskeleton remodeling. Different types of STRIPAK complexes are involved in a variety of biological processes such as cell growth, differentiation, apoptosis, metabolism and immune regulation. The sequence is that of Striatin homolog (strn) from Dictyostelium discoideum (Social amoeba).